A 468-amino-acid chain; its full sequence is 3-isopropylmalate dehydratase large subunit (468 aa).

[4Fe-4S] cluster is bound by residues Cys349, Cys409, and Cys412.

It belongs to the aconitase/IPM isomerase family. LeuC type 1 subfamily. As to quaternary structure, heterodimer of LeuC and LeuD. The cofactor is [4Fe-4S] cluster.

It catalyses the reaction (2R,3S)-3-isopropylmalate = (2S)-2-isopropylmalate. Its pathway is amino-acid biosynthesis; L-leucine biosynthesis; L-leucine from 3-methyl-2-oxobutanoate: step 2/4. In terms of biological role, catalyzes the isomerization between 2-isopropylmalate and 3-isopropylmalate, via the formation of 2-isopropylmaleate. The polypeptide is 3-isopropylmalate dehydratase large subunit (Shewanella baltica (strain OS185)).